The following is a 256-amino-acid chain: Trans-aconitate 2-methyltransferase (256 aa).

Belongs to the methyltransferase superfamily. Tam family.

The protein resides in the cytoplasm. The catalysed reaction is trans-aconitate + S-adenosyl-L-methionine = (E)-3-(methoxycarbonyl)pent-2-enedioate + S-adenosyl-L-homocysteine. Its function is as follows. Catalyzes the S-adenosylmethionine monomethyl esterification of trans-aconitate. This is Trans-aconitate 2-methyltransferase from Rhodopseudomonas palustris (strain BisB18).